Consider the following 256-residue polypeptide: 6-phosphogluconolactonase (256 aa).

The protein belongs to the glucosamine/galactosamine-6-phosphate isomerase family. 6-phosphogluconolactonase subfamily.

It catalyses the reaction 6-phospho-D-glucono-1,5-lactone + H2O = 6-phospho-D-gluconate + H(+). The protein operates within carbohydrate degradation; pentose phosphate pathway; D-ribulose 5-phosphate from D-glucose 6-phosphate (oxidative stage): step 2/3. Functionally, hydrolysis of 6-phosphogluconolactone to 6-phosphogluconate. The polypeptide is 6-phosphogluconolactonase (pgl) (Chlamydia muridarum (strain MoPn / Nigg)).